The sequence spans 740 residues: MENCYCIEPQWPADELLMKYQYISDFFIALAYFSIPLELIYFVKKSAVFPYRWVLVQFGAFIVLCGATHLINLWTFTMHSRTVAVVMTTAKVLTAVVSCATALMLVHIIPDLLSVKTRELFLKNKAAELDREMGLIRTQEETGRHVRMLTHEIRSTLDRHTILKTTLVELGRTLALEECALWMPTRTGLELQLSYTLHQQNPVGYTVPINLPVISQVFSSNRALKISPNSPVASLRPRAGRYVAGEVVAVRVPLLHLSNFQINDWPELSTKRYALMVLMLPSDSARQWRVHELELVEVVADQVAVALSHAAILEESMRARDLLMEQNVALDLARREAETAIRARNDFLAVMNHEMRTPMHAIIALSSLLQETELTPEQRLMVETILKSSNLLATLINDVLDLSRLEDGSLQLDIGTFNLHAVFKEVLNLIKPVTLVKKLSLTLHLGPDLPVFAVGDEKRLMQAILNVVGNAVKFSKEGSISISAIVAKSETFREIRVPDFHPVPSDSHFYLRVQVKDTGSGISPQDIPKLFTKFAQTTVGPRNSGGSGLGLAICKRFVNLMEGHIWLESEGLGKGCTATFIVKLGIADQSNESKLPYTSKIHENSIHTSFPGLKVLVMDDNGVSRSVTKGLLVHLGCEVTTAGSIEEFLRVVSQEHKVVFMDICTPGVDGYELAIRIREKFAKCHERPFMVVLTGNSDKVTKESCLRAGMDGLILKPVSIDKMRSVLSELIERRVLFETS.

Transmembrane regions (helical) follow at residues 23-43 (ISDFFIALAYFSIPLELIYFV), 54-74 (VLVQFGAFIVLCGATHLINLW), and 92-112 (VLTAVVSCATALMLVHIIPDL). Residues C65 and H69 each coordinate Cu cation. Positions 158 to 307 (DRHTILKTTL…VVADQVAVAL (150 aa)) constitute a GAF domain. The region spanning 350–588 (VMNHEMRTPM…TFIVKLGIAD (239 aa)) is the Histidine kinase domain. Phosphohistidine; by autocatalysis is present on H353. Positions 614 to 731 (KVLVMDDNGV…KMRSVLSELI (118 aa)) constitute a Response regulatory domain. 4-aspartylphosphate is present on D662.

It belongs to the ethylene receptor family. Homodimer; disulfide-linked. It depends on Cu cation as a cofactor. In terms of processing, activation probably requires a transfer of a phosphate group between a His in the transmitter domain and an Asp of the receiver domain. As to expression, in seeds and placenta.

It localises to the endoplasmic reticulum membrane. The catalysed reaction is ATP + protein L-histidine = ADP + protein N-phospho-L-histidine.. May act early in the ethylene signal transduction pathway, possibly as an ethylene receptor, or as a regulator of the pathway. This Cucumis melo var. cantalupensis (Netted muskmelon) protein is Ethylene receptor 1 (ETR1).